The chain runs to 241 residues: Uridylate kinase (241 aa).

Position 9 to 10 (9 to 10 (GS)) interacts with ATP. Glycine 44 provides a ligand contact to UMP. The ATP site is built by glycine 45 and arginine 49. UMP contacts are provided by residues aspartate 66 and 114–120 (VTPGQTT). ATP-binding residues include threonine 140, tyrosine 146, and aspartate 149. The disordered stretch occupies residues 222–241 (TDVIPTGSEEPIYWTGSSDA).

This sequence belongs to the UMP kinase family. As to quaternary structure, homohexamer.

It localises to the cytoplasm. It carries out the reaction UMP + ATP = UDP + ADP. The protein operates within pyrimidine metabolism; CTP biosynthesis via de novo pathway; UDP from UMP (UMPK route): step 1/1. Its activity is regulated as follows. Inhibited by UTP. Its function is as follows. Catalyzes the reversible phosphorylation of UMP to UDP. This Halorubrum lacusprofundi (strain ATCC 49239 / DSM 5036 / JCM 8891 / ACAM 34) protein is Uridylate kinase.